The chain runs to 88 residues: Large ribosomal subunit protein bL31B (88 aa).

It belongs to the bacterial ribosomal protein bL31 family. Type B subfamily. Part of the 50S ribosomal subunit.

In Burkholderia orbicola (strain MC0-3), this protein is Large ribosomal subunit protein bL31B.